Reading from the N-terminus, the 507-residue chain is Protoheme IX farnesyltransferase, mitochondrial (507 aa).

The segment covering 72 to 90 (STSASASTTHDSTLSSSPT) has biased composition (low complexity). The tract at residues 72–136 (STSASASTTH…RGEKPLPPDA (65 aa)) is disordered. Over residues 99–111 (KDHKIAPHRKRQA) the composition is skewed to basic residues. 8 consecutive transmembrane segments (helical) span residues 166–186 (LTML…VPEM), 199–219 (PLTL…ANAL), 248–268 (AAVL…YFGV), 270–290 (PTVS…YTPL), 298–318 (TWIG…AAAG), 339–359 (IGGW…FMAL), 392–412 (FVFI…WSFA), and 441–461 (GLFW…LLHK).

It belongs to the UbiA prenyltransferase family.

It is found in the mitochondrion membrane. The enzyme catalyses heme b + (2E,6E)-farnesyl diphosphate + H2O = Fe(II)-heme o + diphosphate. Its function is as follows. Converts protoheme IX and farnesyl diphosphate to heme O. This Gibberella zeae (strain ATCC MYA-4620 / CBS 123657 / FGSC 9075 / NRRL 31084 / PH-1) (Wheat head blight fungus) protein is Protoheme IX farnesyltransferase, mitochondrial (COX10).